A 396-amino-acid chain; its full sequence is Cell division protein DivIB (396 aa).

Disordered regions lie at residues Met1–Gln23 and Glu37–Glu116. At Met1 to Arg130 the chain is on the cytoplasmic side. Composition is skewed to basic and acidic residues over residues Glu37–Gln65 and Glu75–Glu116. Residues Ala131–Pro151 form a helical membrane-spanning segment. The Extracellular portion of the chain corresponds to Tyr152–Arg396. One can recognise a POTRA domain in the interval Ala153–Tyr223. A compositionally biased stretch (basic and acidic residues) spans Lys361 to Asn385. Residues Lys361–Arg396 are disordered. Low complexity predominate over residues Arg386 to Arg396.

This sequence belongs to the FtsQ/DivIB family. DivIB subfamily.

The protein localises to the cell membrane. Its function is as follows. Cell division protein that may be involved in stabilizing or promoting the assembly of the division complex. In Streptococcus pneumoniae (strain ATCC BAA-255 / R6), this protein is Cell division protein DivIB.